Reading from the N-terminus, the 549-residue chain is Capsid vertex component 2 (549 aa).

The interaction with major capsid protein/MCP stretch occupies residues 1–54 (MLTSERSYLRYPKNRRWTEAGRFWAPHPENVLFIHKPTMEETRRVALGLRSQLV).

This sequence belongs to the herpesviridae CVC2 protein family. In terms of assembly, heterodimerizes with CVC1. Interacts with major capsid protein/MCP and triplex capsid protein 1/TRX1 at the pentamer vertices. Interacts with the large tegument protein/LTP.

The protein resides in the virion. The protein localises to the host nucleus. Capsid vertex-specific component that plays a role during viral DNA encapsidation, assuring correct genome cleavage and presumably stabilizing capsids that contain full-length viral genomes. Participates in the interaction between the capsid and the tegument through interaction with the large tegument protein/LTP. In Human herpesvirus 8 type P (isolate GK18) (HHV-8), this protein is Capsid vertex component 2.